Here is a 78-residue protein sequence, read N- to C-terminus: Exodeoxyribonuclease 7 small subunit (78 aa).

It belongs to the XseB family. In terms of assembly, heterooligomer composed of large and small subunits.

It is found in the cytoplasm. It catalyses the reaction Exonucleolytic cleavage in either 5'- to 3'- or 3'- to 5'-direction to yield nucleoside 5'-phosphates.. Functionally, bidirectionally degrades single-stranded DNA into large acid-insoluble oligonucleotides, which are then degraded further into small acid-soluble oligonucleotides. In Nocardia farcinica (strain IFM 10152), this protein is Exodeoxyribonuclease 7 small subunit.